Consider the following 434-residue polypeptide: Alpha-enolase (434 aa).

Mg(2+) is bound at residue Ser40. Substrate-binding residues include His158 and Glu167. Catalysis depends on Glu210, which acts as the Proton donor. Positions 245, 293, and 318 each coordinate Mg(2+). Substrate-binding residues include Glu293 and Asp318. The active-site Proton acceptor is the Lys343. Substrate-binding positions include 370 to 373 (SHRS) and Lys394.

Belongs to the enolase family. Homodimer. Requires Mg(2+) as cofactor.

Its subcellular location is the cytoplasm. The enzyme catalyses (2R)-2-phosphoglycerate = phosphoenolpyruvate + H2O. The protein operates within carbohydrate degradation; glycolysis; pyruvate from D-glyceraldehyde 3-phosphate: step 4/5. Its function is as follows. Both an enzyme and a lens structural protein. The polypeptide is Alpha-enolase (ENO1) (Anas platyrhynchos (Mallard)).